The following is a 308-amino-acid chain: Tetraacyldisaccharide 4'-kinase (308 aa).

63–70 (SFGGNGKT) serves as a coordination point for ATP.

The protein belongs to the LpxK family.

The enzyme catalyses a lipid A disaccharide + ATP = a lipid IVA + ADP + H(+). The protein operates within glycolipid biosynthesis; lipid IV(A) biosynthesis; lipid IV(A) from (3R)-3-hydroxytetradecanoyl-[acyl-carrier-protein] and UDP-N-acetyl-alpha-D-glucosamine: step 6/6. Transfers the gamma-phosphate of ATP to the 4'-position of a tetraacyldisaccharide 1-phosphate intermediate (termed DS-1-P) to form tetraacyldisaccharide 1,4'-bis-phosphate (lipid IVA). The sequence is that of Tetraacyldisaccharide 4'-kinase from Campylobacter jejuni (strain RM1221).